The following is a 304-amino-acid chain: MFLFSRKTKTPISTYSDSYRAPTSIKEVYKDPPLWAWEANKFVTPGLTHTAQRHVDPDALQKMLKCAVQDYSYKGSIPSHPYFPEKYWLCPEEADRCNPNYLCGNPNYLCSNQYNTWRMGPYNCWNKCTTYLPRLPKEAGMETVVRGMPLVYPPKPERLNAYEREVVVNMLNSLSRNQPLPQITPRCGCVDPLPGRLPFQGYESACSGRHYCLRGMDYCVSGPPCTERRLRPLCTELPTVRSVSPCEHRSGMQCAVITPQPSYYPCPNLRWDTSHFKKTGGSQRNNYVVHPEFVSETYPDYHCW.

It belongs to the SPMIP6 family. Microtubule inner protein component of sperm flagellar doublet microtubules. Interacts with alpha-tubulin.

Its subcellular location is the cytoplasm. It is found in the cytoskeleton. The protein resides in the nucleus. It localises to the mitochondrion. The protein localises to the flagellum axoneme. May participate in intramanchette transport and midpiece formation of the sperm tail. May play a potential role in somatic cell proliferation. This chain is Sperm microtubule inner protein 6 (SPMIP6), found in Bos taurus (Bovine).